The following is a 228-amino-acid chain: Translation initiation factor 6 (228 aa).

In terms of biological role, binds to the 50S ribosomal subunit and prevents its association with the 30S ribosomal subunit to form the 70S initiation complex. The sequence is that of Translation initiation factor 6 from Methanocaldococcus jannaschii (strain ATCC 43067 / DSM 2661 / JAL-1 / JCM 10045 / NBRC 100440) (Methanococcus jannaschii).